A 1196-amino-acid chain; its full sequence is RNA-dependent RNA polymerase 6 (1196 aa).

It belongs to the RdRP family. Interacts with SGS3. Widely expressed.

The protein resides in the cytoplasmic granule. Its subcellular location is the nucleus. The enzyme catalyses RNA(n) + a ribonucleoside 5'-triphosphate = RNA(n+1) + diphosphate. RNA-dependent RNA polymerase involved in post-transcriptional gene silencing (PTGS). Possesses ssRNA and ssDNA-dependent polymerase activity, but does not have priming activity. Possesses in vitro 3' nucleotidyltransferase activity in the presence of UTP as single nucleotide. Required for the production of 21 nucleotide trans-acting small interfering RNAs (ta-siRNAs) derived from TAS1, TAS2 and TAS3 endogenous transcripts. Acts in the RDR6/SGS3/DCL4/AGO7 ta-siRNA pathway involved in leaf developmental timing. Required for the production of natural siRNAs (nat-siRNAs) derived from cis-natural antisense transcripts. Required for the production of 24 nucleotide nat-siRNAs derived from the stress-related P5CDH-SRO5 antisense gene pair. Required for PTGS induced by transgene direct repeats. Plays an essential role in transitive silencing of transgenes by processing secondary siRNAs. This pathway, which requires DCL2 and DCL4, amplifies silencing by using the target RNA as substrate to generate secondary siRNAs, providing an efficient mechanism for long-distance silencing. Involved in the biogenesis of secondary siRNAs which require 22 nucleotide miRNAs associated to AGO1. Participates synergistically with AS1 and AS2 to proper plant development by repressing the miR165 and miR166 microRNAs (independently of AGO10) that may lead to mRNA degradation of genes in the class III HD-ZIP family. Required for the production of some small RNAs derived from the crucifer-infecting tobamovirus (TMV-cg). Required for sense virus-induced post-transcriptional gene silencing (S-PTGS). The protein is RNA-dependent RNA polymerase 6 (RDR6) of Arabidopsis thaliana (Mouse-ear cress).